A 1312-amino-acid polypeptide reads, in one-letter code: Angiotensin-converting enzyme (1312 aa).

An N-terminal signal peptide occupies residues 1–34 (MGAASGQRGRWPLSPPLLMLSLLVLLLQPSPAPA). Residues 35 to 1264 (LDPGLQPGNF…LEPQQARVGQ (1230 aa)) lie on the Extracellular side of the membrane. Peptidase M2 domains are found at residues 45-629 (SPDE…LGWP) and 648-1227 (ETDE…LGWP). N-linked (GlcNAc...) asparagine glycosylation is found at asparagine 59, asparagine 79, asparagine 116, asparagine 151, and asparagine 165. Residues cysteine 162 and cysteine 170 are joined by a disulfide bond. Tyrosine 236 is a chloride binding site. N-linked (GlcNAc...) asparagine glycosylation occurs at asparagine 323. The cysteines at positions 364 and 382 are disulfide-linked. Histidine 395 lines the Zn(2+) pocket. Glutamate 396 (proton acceptor 1) is an active-site residue. The Zn(2+) site is built by histidine 399 and glutamate 423. N-linked (GlcNAc...) asparagine glycosylation is present at asparagine 514. Residue histidine 525 is the Proton donor 1 of the active site. Arginine 534 is a binding site for chloride. Cysteine 550 and cysteine 562 are oxidised to a cystine. N-linked (GlcNAc...) asparagine glycosylation is present at asparagine 682. Residues asparagine 700 and asparagine 719 are each glycosylated (N-linked (GlcNAc...) (complex) asparagine). The cysteines at positions 762 and 768 are disulfide-linked. A glycan (N-linked (GlcNAc...) asparagine) is linked at asparagine 765. Positions 796 and 834 each coordinate chloride. N-linked (GlcNAc...) asparagine glycosylation is present at asparagine 947. A disulfide bridge connects residues cysteine 962 and cysteine 980. Histidine 993 lines the Zn(2+) pocket. Glutamate 994 serves as the catalytic Proton acceptor 2. The Zn(2+) site is built by histidine 997 and glutamate 1021. Chloride contacts are provided by tryptophan 1095 and arginine 1099. Histidine 1123 functions as the Proton donor 2 in the catalytic mechanism. Arginine 1132 lines the chloride pocket. Cysteine 1148 and cysteine 1160 are joined by a disulfide. An N-linked (GlcNAc...) asparagine glycan is attached at asparagine 1196. Residues 1220–1261 (HGETLGWPEYNWAPNTARAEGSTAESNRVNFLGLYLEPQQAR) are juxtamembrane stalk. A helical transmembrane segment spans residues 1265–1281 (WVLLFLGVALLVATVGL). Residues 1282 to 1312 (AHRLYNIRNHHSLRRPHRGPQFGSEVELRHS) lie on the Cytoplasmic side of the membrane. At serine 1305 the chain carries Phosphoserine.

Belongs to the peptidase M2 family. Monomer and homodimer; homodimerizes following binding to an inhibitor. Interacts with calmodulin (CALM1, CALM2 or CALM3); interaction takes place in the cytoplasmic region and regulates phosphorylation and proteolytic cleavage. Zn(2+) is required as a cofactor. It depends on chloride as a cofactor. Post-translationally, produced following proteolytic cleavage by secretase enzymes that cleave the transmembrane form in the juxtamembrane stalk region upstream of the transmembrane region. Cleavage can take place at different sites of the juxtamembrane stalk region. Phosphorylated by CK2 on Ser-1305; which allows membrane retention. Phosphorylated on tyrosine residues on its extracellular part, promoting cleavage by secretase enzymes and formation of the soluble form (Angiotensin-converting enzyme, soluble form). As to expression, highly expressed in kidney and lung; not expressed in the liver. In the brain, expressed in the cerebral cortex, hippocampus, cerebellum and basal ganglia/brainstem. Highly expressed in dopamine receptor DRD1-expressing neurons in the dorsal striatum and the nucleus accumbens of the brain. Specifically expressed in spermatocytes, adult testis.

Its subcellular location is the cell membrane. The protein localises to the cytoplasm. It localises to the secreted. The catalysed reaction is Release of a C-terminal dipeptide, oligopeptide-|-Xaa-Yaa, when Xaa is not Pro, and Yaa is neither Asp nor Glu. Thus, conversion of angiotensin I to angiotensin II, with increase in vasoconstrictor activity, but no action on angiotensin II.. It carries out the reaction angiotensin I + H2O = L-histidyl-L-leucine + angiotensin II. The enzyme catalyses bradykinin + H2O = L-Phe-L-Arg + bradykinin(1-7). It catalyses the reaction substance P + H2O = substance P(1-9) + L-Leu-L-Met-NH2. The catalysed reaction is substance P + H2O = substance P(1-8) + Gly-L-Leu-L-Met-NH2. It carries out the reaction substance P + H2O = L-Phe-L-Phe-Gly-L-Leu-L-Met-NH2 + substance P(1-6). The enzyme catalyses neurotensin + H2O = neurotensin(1-11) + L-isoleucyl-L-leucine. It catalyses the reaction goralatide + H2O = N-acetyl-L-seryl-L-aspartate + L-lysyl-L-proline. The catalysed reaction is Met-enkephalin + H2O = L-phenylalanyl-L-methionine + L-tyrosylglycylglycine. It carries out the reaction Leu-enkephalin + H2O = L-tyrosylglycylglycine + L-phenylalanyl-L-leucine. The enzyme catalyses Met-enkephalin-Arg-Phe + H2O = L-arginyl-L-phenylalanine + Met-enkephalin. The dipeptidyl carboxypeptidase activity is specifically inhibited by lisinopril, captopril and enalaprilat. The N-terminal catalytic domain, but not the C-terminal catalytic domain, is specifically inhibited by the phosphinic peptide RXP 407. Its activity is regulated as follows. The putative GPIase activity is nearly insensitive to captopril. Functionally, dipeptidyl carboxypeptidase that removes dipeptides from the C-terminus of a variety of circulating hormones, such as angiotensin I, bradykinin or enkephalins, thereby playing a key role in the regulation of blood pressure, electrolyte homeostasis or synaptic plasticity. Composed of two similar catalytic domains, each possessing a functional active site, with different selectivity for substrates. Plays a major role in the angiotensin-renin system that regulates blood pressure and sodium retention by the kidney by converting angiotensin I to angiotensin II, resulting in an increase of the vasoconstrictor activity of angiotensin. Also able to inactivate bradykinin, a potent vasodilator, and therefore enhance the blood pressure response. Acts as a regulator of synaptic transmission by mediating cleavage of neuropeptide hormones, such as substance P, neurotensin or enkephalins. Catalyzes degradation of different enkephalin neuropeptides (Met-enkephalin, Leu-enkephalin, Met-enkephalin-Arg-Phe and possibly Met-enkephalin-Arg-Gly-Leu). Acts as a regulator of synaptic plasticity in the nucleus accumbens of the brain by mediating cleavage of Met-enkephalin-Arg-Phe, a strong ligand of Mu-type opioid receptor OPRM1, into Met-enkephalin. Met-enkephalin-Arg-Phe cleavage by ACE decreases activation of OPRM1, leading to long-term synaptic potentiation of glutamate release. Also acts as a regulator of hematopoietic stem cell differentiation by mediating degradation of hemoregulatory peptide N-acetyl-SDKP (AcSDKP). Acts as a regulator of cannabinoid signaling pathway by mediating degradation of hemopressin, an antagonist peptide of the cannabinoid receptor CNR1. Involved in amyloid-beta metabolism by catalyzing degradation of Amyloid-beta protein 40 and Amyloid-beta protein 42 peptides, thereby preventing plaque formation. Catalyzes cleavage of cholecystokinin (maturation of Cholecystokinin-8 and Cholecystokinin-5) and Gonadoliberin-1 (both maturation and degradation) hormones. Degradation of hemoregulatory peptide N-acetyl-SDKP (AcSDKP) and amyloid-beta proteins is mediated by the N-terminal catalytic domain, while angiotensin I and cholecystokinin cleavage is mediated by the C-terminal catalytic region. In terms of biological role, soluble form that is released in blood plasma and other body fluids following proteolytic cleavage in the juxtamembrane stalk region. Isoform produced by alternative promoter usage that is specifically expressed in spermatocytes and adult testis, and which is required for male fertility. In contrast to somatic isoforms, only contains one catalytic domain. Acts as a dipeptidyl carboxypeptidase that removes dipeptides from the C-terminus of substrates. The identity of substrates that are needed for male fertility is unknown. Isoform Testis-specific and isoform Somatic have distinct activities and cannot completely compensate for the loss of the other when expressed in somatic tissues or testis. May also have a glycosidase activity which releases GPI-anchored proteins from the membrane by cleaving the mannose linkage in the GPI moiety. The GPIase activity was reported to be essential for the egg-binding ability of the sperm. This activity is however unclear and has been challenged by other groups, suggesting that it may be indirect. This chain is Angiotensin-converting enzyme, found in Mus musculus (Mouse).